The following is a 148-amino-acid chain: Small ribosomal subunit protein bS6 (148 aa).

The segment at 96–148 (HEEGQSAMLTRRDDRRERDGDDRPRRREGGFDRGDRGDRGPRRPRDTEAGEGA) is disordered.

Belongs to the bacterial ribosomal protein bS6 family.

Functionally, binds together with bS18 to 16S ribosomal RNA. The polypeptide is Small ribosomal subunit protein bS6 (Brucella canis (strain ATCC 23365 / NCTC 10854 / RM-666)).